The primary structure comprises 491 residues: Cytosolic Fe-S cluster assembly factor NAR1 (491 aa).

8 residues coordinate [4Fe-4S] cluster: C20, C59, C62, C65, C177, C231, C412, and C416.

This sequence belongs to the NARF family. Interacts with CIA1.

Its function is as follows. Component of the cytosolic Fe/S protein assembly machinery. Required for maturation of extramitochondrial Fe/S proteins. May play a role in the transfer of pre-assembled Fe/S clusters to target apoproteins. This Saccharomyces cerevisiae (strain YJM789) (Baker's yeast) protein is Cytosolic Fe-S cluster assembly factor NAR1 (NAR1).